A 466-amino-acid chain; its full sequence is Cysteine--tRNA ligase (466 aa).

Cys-28 is a Zn(2+) binding site. Residues 30-40 (PTVYNYIHIGN) carry the 'HIGH' region motif. Residues Cys-208, His-233, and Glu-237 each coordinate Zn(2+). A 'KMSKS' region motif is present at residues 265-269 (KMSKS). An ATP-binding site is contributed by Lys-268. Ser-269 is modified (phosphoserine).

The protein belongs to the class-I aminoacyl-tRNA synthetase family. Monomer. The cofactor is Zn(2+).

It is found in the cytoplasm. It carries out the reaction tRNA(Cys) + L-cysteine + ATP = L-cysteinyl-tRNA(Cys) + AMP + diphosphate. The chain is Cysteine--tRNA ligase from Shouchella clausii (strain KSM-K16) (Alkalihalobacillus clausii).